The chain runs to 278 residues: Large ribosomal subunit protein uL2 (278 aa).

Residues 222–278 are disordered; the sequence is GVVMNPIDHPHGGGEGRTSGGRHPVTPWGKPTKGKKTRSNKSTNKFILISRHKRKKK.

It belongs to the universal ribosomal protein uL2 family. In terms of assembly, part of the 50S ribosomal subunit. Forms a bridge to the 30S subunit in the 70S ribosome.

Functionally, one of the primary rRNA binding proteins. Required for association of the 30S and 50S subunits to form the 70S ribosome, for tRNA binding and peptide bond formation. It has been suggested to have peptidyltransferase activity; this is somewhat controversial. Makes several contacts with the 16S rRNA in the 70S ribosome. This chain is Large ribosomal subunit protein uL2, found in Afipia carboxidovorans (strain ATCC 49405 / DSM 1227 / KCTC 32145 / OM5) (Oligotropha carboxidovorans).